We begin with the raw amino-acid sequence, 249 residues long: Probable transcriptional regulatory protein OTT_1378 (249 aa).

This sequence belongs to the TACO1 family.

Its subcellular location is the cytoplasm. In Orientia tsutsugamushi (strain Ikeda) (Rickettsia tsutsugamushi), this protein is Probable transcriptional regulatory protein OTT_1378.